Here is a 293-residue protein sequence, read N- to C-terminus: Formamidopyrimidine-DNA glycosylase (293 aa).

Proline 2 functions as the Schiff-base intermediate with DNA in the catalytic mechanism. Glutamate 3 (proton donor) is an active-site residue. The active-site Proton donor; for beta-elimination activity is the lysine 58. Residues histidine 104, arginine 127, and arginine 170 each coordinate DNA. Residues serine 257 to threonine 293 form an FPG-type zinc finger. The active-site Proton donor; for delta-elimination activity is arginine 283.

This sequence belongs to the FPG family. As to quaternary structure, monomer. Zn(2+) is required as a cofactor.

The catalysed reaction is Hydrolysis of DNA containing ring-opened 7-methylguanine residues, releasing 2,6-diamino-4-hydroxy-5-(N-methyl)formamidopyrimidine.. It catalyses the reaction 2'-deoxyribonucleotide-(2'-deoxyribose 5'-phosphate)-2'-deoxyribonucleotide-DNA = a 3'-end 2'-deoxyribonucleotide-(2,3-dehydro-2,3-deoxyribose 5'-phosphate)-DNA + a 5'-end 5'-phospho-2'-deoxyribonucleoside-DNA + H(+). Functionally, involved in base excision repair of DNA damaged by oxidation or by mutagenic agents. Acts as a DNA glycosylase that recognizes and removes damaged bases. Has a preference for oxidized purines, such as 7,8-dihydro-8-oxoguanine (8-oxoG). Has AP (apurinic/apyrimidinic) lyase activity and introduces nicks in the DNA strand. Cleaves the DNA backbone by beta-delta elimination to generate a single-strand break at the site of the removed base with both 3'- and 5'-phosphates. This is Formamidopyrimidine-DNA glycosylase from Brucella melitensis biotype 1 (strain ATCC 23456 / CCUG 17765 / NCTC 10094 / 16M).